A 382-amino-acid polypeptide reads, in one-letter code: Mannitol-1-phosphate 5-dehydrogenase (382 aa).

Residue 3–14 (ALHFGAGNIGRG) participates in NAD(+) binding.

Belongs to the mannitol dehydrogenase family.

It catalyses the reaction D-mannitol 1-phosphate + NAD(+) = beta-D-fructose 6-phosphate + NADH + H(+). This is Mannitol-1-phosphate 5-dehydrogenase from Erwinia tasmaniensis (strain DSM 17950 / CFBP 7177 / CIP 109463 / NCPPB 4357 / Et1/99).